Here is a 634-residue protein sequence, read N- to C-terminus: Sodium-dependent neutral amino acid transporter B(0)AT1 (634 aa).

At 1-41 the chain is on the cytoplasmic side; it reads MVRLVLPNPGLEERIPSLDELEVIEKEEAGSRPKWDNKAQY. At serine 17 the chain carries Phosphoserine. The helical transmembrane segment at 42–62 threads the bilayer; that stretch reads MLTCVGFCVGLGNVWRFPYLC. Over 63 to 67 the chain is Extracellular; sequence QSHGG. A helical transmembrane segment spans residues 68–88; that stretch reads GAFMIPFLILLVFEGIPLLYL. Residues 89–119 lie on the Cytoplasmic side of the membrane; it reads EFAIGQRLRKGSMGVWSSIHPALKGIGIASM. Residues 120 to 140 form a helical membrane-spanning segment; it reads FVSFMVGLYYNTIIAWVMWYF. Topologically, residues 141–192 are extracellular; the sequence is FNSFQEPLPWSECPLNQNQTGYVEECAKSSSVDYFWYRETLNISTSISDSGS. N-linked (GlcNAc...) asparagine glycans are attached at residues asparagine 158 and asparagine 182. Residues 193–213 traverse the membrane as a helical segment; the sequence is IQWWILLCLTCAWSVLYVCII. Topologically, residues 214-221 are cytoplasmic; that stretch reads RGIETTGK. The chain crosses the membrane as a helical span at residues 222–242; it reads AVYITSTLPYVVLTIFLIRGL. The Extracellular portion of the chain corresponds to 243–268; that stretch reads TLKGATNGIVFLFTPNITELSNPNTW. A glycan (N-linked (GlcNAc...) asparagine) is linked at asparagine 258. Residues 269-289 form a helical membrane-spanning segment; the sequence is LDAGAQVFYSFSLAFGGLISF. The Cytoplasmic segment spans residues 290-304; that stretch reads SSYNSVHNNCEMDSV. Residues 305-325 form a helical membrane-spanning segment; it reads IVSVINGFTSVYAATVVYSII. The Extracellular portion of the chain corresponds to 326–413; that stretch reads GFRATERFDD…TEAITKMPVS (88 aa). N-linked (GlcNAc...) asparagine glycosylation is found at asparagine 354 and asparagine 368. A helical membrane pass occupies residues 414–434; sequence PLWSVLFFIMLFCLGLSSMFG. The Cytoplasmic portion of the chain corresponds to 435–456; sequence NMEGVVVPLQDLNITPKKWPKE. Residues 457 to 477 traverse the membrane as a helical segment; the sequence is LLTGLICLGTYLIAFIFTLNS. Topologically, residues 478 to 487 are extracellular; the sequence is GQYWLSLLDS. The helical transmembrane segment at 488–508 threads the bilayer; the sequence is FAGSIPLLIIAFCEMFAVVYV. The Cytoplasmic segment spans residues 509 to 531; that stretch reads YGVDRFNKDIEFMIGHKPNIFWQ. Residues 532–552 traverse the membrane as a helical segment; the sequence is VTWRVVSPLIMLVIFLFFFVI. Residues 553-581 are Extracellular-facing; it reads EVNKTLMYSIWDPNYEEFPKSQKIPYPNW. Asparagine 555 carries N-linked (GlcNAc...) asparagine glycosylation. Residues 582 to 602 form a helical membrane-spanning segment; sequence VYAVVVTVAGVPCLSIPCFAI. At 603 to 634 the chain is on the cytoplasmic side; the sequence is YKFIRNCCQKSDDHHGLVNTLSTASVNGDLKN. Serine 627 carries the phosphoserine modification.

This sequence belongs to the sodium:neurotransmitter symporter (SNF) (TC 2.A.22) family. SLC6A19 subfamily. As to quaternary structure, interacts in a tissue-specific manner with ACE2 in small intestine and with CLTRN in the kidney. Interacts with CLTRN; this interaction is required for trafficking of SLC6A19 to the plasma membrane and for its catalytic activation in kidneys. Interacts with ACE2; this interaction is required for trafficking of SLC6A19 to the plasma membrane and for its catalytic activation in intestine. Interacts with ANPEP; the interaction positively regulates its amino acid transporter activity. Predominantly expressed in kidney and small intestine (at protein level). Expressed in the intestinal brush border (at protein level). Expression not observed in other organs, such as lung, skeletal muscle, brain, liver and pancreas. In kidney, expression is localized in the renal cortex but not in the medulla. Substantial amounts of expression in the proximal tubules. The distal nephron segments and the glomeruli are consistently negative. In the small intestine, expression is exclusively localized in villus enterocytes. High resolution of the hybridization-positive villi reveals a gradient of expression with the highest levels in apical cells. Not detected in crypt cells or in any other cell types of the small intestine.

The protein localises to the cell membrane. The catalysed reaction is L-alanine(in) + Na(+)(in) = L-alanine(out) + Na(+)(out). It carries out the reaction L-cysteine(in) + Na(+)(in) = L-cysteine(out) + Na(+)(out). It catalyses the reaction L-glutamine(in) + Na(+)(in) = L-glutamine(out) + Na(+)(out). The enzyme catalyses glycine(in) + Na(+)(in) = glycine(out) + Na(+)(out). The catalysed reaction is L-isoleucine(in) + Na(+)(in) = L-isoleucine(out) + Na(+)(out). It carries out the reaction L-leucine(in) + Na(+)(in) = L-leucine(out) + Na(+)(out). It catalyses the reaction L-methionine(in) + Na(+)(in) = L-methionine(out) + Na(+)(out). The enzyme catalyses L-phenylalanine(in) + Na(+)(in) = L-phenylalanine(out) + Na(+)(out). The catalysed reaction is L-serine(in) + Na(+)(in) = L-serine(out) + Na(+)(out). It carries out the reaction L-tryptophan(in) + Na(+)(in) = L-tryptophan(out) + Na(+)(out). It catalyses the reaction L-tyrosine(in) + Na(+)(in) = L-tyrosine(out) + Na(+)(out). The enzyme catalyses L-valine(in) + Na(+)(in) = L-valine(out) + Na(+)(out). Transporter that mediates resorption of neutral amino acids across the apical membrane of renal and intestinal epithelial cells. This uptake is sodium-dependent and chloride-independent. Requires CLTRN in kidney or ACE2 in intestine for cell surface expression and amino acid transporter activity. This Mus musculus (Mouse) protein is Sodium-dependent neutral amino acid transporter B(0)AT1 (Slc6a19).